Here is a 325-residue protein sequence, read N- to C-terminus: Probable tRNA-dihydrouridine synthase 2 (325 aa).

18-20 is a binding site for FMN; that stretch reads PME. The active-site Proton donor is Cys105. FMN contacts are provided by residues Lys143, 208–210, and 232–233; these read NGD and GR.

This sequence belongs to the Dus family. FMN is required as a cofactor.

The catalysed reaction is a 5,6-dihydrouridine in tRNA + NAD(+) = a uridine in tRNA + NADH + H(+). The enzyme catalyses a 5,6-dihydrouridine in tRNA + NADP(+) = a uridine in tRNA + NADPH + H(+). In terms of biological role, catalyzes the synthesis of 5,6-dihydrouridine (D), a modified base found in the D-loop of most tRNAs, via the reduction of the C5-C6 double bond in target uridines. The protein is Probable tRNA-dihydrouridine synthase 2 (dus2) of Bacillus subtilis (strain 168).